Reading from the N-terminus, the 250-residue chain is Ubiquinone/menaquinone biosynthesis C-methyltransferase UbiE (250 aa).

Residues threonine 73, aspartate 94, 122–123, and serine 139 contribute to the S-adenosyl-L-methionine site; that span reads NA.

Belongs to the class I-like SAM-binding methyltransferase superfamily. MenG/UbiE family.

It carries out the reaction a 2-demethylmenaquinol + S-adenosyl-L-methionine = a menaquinol + S-adenosyl-L-homocysteine + H(+). The enzyme catalyses a 2-methoxy-6-(all-trans-polyprenyl)benzene-1,4-diol + S-adenosyl-L-methionine = a 5-methoxy-2-methyl-3-(all-trans-polyprenyl)benzene-1,4-diol + S-adenosyl-L-homocysteine + H(+). It functions in the pathway quinol/quinone metabolism; menaquinone biosynthesis; menaquinol from 1,4-dihydroxy-2-naphthoate: step 2/2. Its pathway is cofactor biosynthesis; ubiquinone biosynthesis. In terms of biological role, methyltransferase required for the conversion of demethylmenaquinol (DMKH2) to menaquinol (MKH2) and the conversion of 2-polyprenyl-6-methoxy-1,4-benzoquinol (DDMQH2) to 2-polyprenyl-3-methyl-6-methoxy-1,4-benzoquinol (DMQH2). This is Ubiquinone/menaquinone biosynthesis C-methyltransferase UbiE from Francisella tularensis subsp. tularensis (strain FSC 198).